Reading from the N-terminus, the 197-residue chain is MSLSIDVTSLPSISSSIFKNESSSTTSTLSGKSIGRSEQYISPDAEAFNKYMLSKSPEDIGPSDSASNDPLTSFSIRSNAVKTNADAGVSMDSSTQSRPSSNVGCDQVDFSLTKGINVSANLDSCISISTDHKKEKSKKDKSRKHYPRIEADSDSEDYVLDDSDSDDGKCKNCKYKKKYFALRMRMKQVAMQLIEDL.

A compositionally biased stretch (low complexity) spans 17 to 30 (IFKNESSSTTSTLS). Disordered regions lie at residues 17 to 37 (IFKN…IGRS) and 53 to 72 (LSKS…DPLT). Ser67 is modified (phosphoserine; by host CK1). Asp92 contributes to the Mg(2+) binding site. Residues 129–166 (STDHKKEKSKKDKSRKHYPRIEADSDSEDYVLDDSDSD) form a disordered region. Residues 152 to 165 (DSDSEDYVLDDSDS) show a composition bias toward acidic residues. Ser153, Ser155, Ser163, and Ser165 each carry phosphoserine; by host. The tract at residues 188–197 (QVAMQLIEDL) is homodimerization and interaction with NSP6.

Belongs to the rotavirus NSP5 family. In terms of assembly, homodimer. Interacts with VP1. Interacts with VP2. Interacts with NSP2; this interaction leads to up-regulation of NSP5 hyperphosphorylation and formation of virus factories. Interacts with NSP6. Participates in the selective exclusion of host proteins from stress granules (SG) and P bodies (PB). Also participates in the sequestration of these remodeled organelles in viral factories. Magnesium is required for ATPase activity. serves as cofactor. Requires Mg(2+) as cofactor. O-glycosylated. Post-translationally, hyperphosphorylated on serine residues, when in dimeric form. Phosphorylation by host CK1 is required for the hyperphosphorylation of NSP5 dimer.

The protein localises to the host cytoplasm. Its function is as follows. Plays an essential role in the viral genome replication. Participates, together with NSP2, in the formation of viral factories (viroplasms), which are large inclusions in the host cytoplasm where replication intermediates are assembled and viral RNA replication takes place. Orchestrates the recruitment of viroplasmic proteins such as capsid proteins to these factories. Participates in the selective exclusion of host proteins from stress granules (SG) and P bodies (PB). Also participates in the sequestration of these remodeled organelles in viral factories. The sequence is that of Non-structural protein 5 from Sus scrofa (Pig).